Consider the following 507-residue polypeptide: MITLTPGRLTLPQLRRIARENVQIALDPASFAAIDRGAQAVADIAAKGEPAYGINTGFGRLASTHIPHDQLELLQKNLVLSHAVGVGEPMARPVVRLLMALKLSSLGRGHSGIRRVVMDALVALFNADVLPLIPVKGSVGASGDLAPLAHMSAVLLGIGDVFIRGERASAAEGLRVAGLAPLTLEAKEGLALLNGTQASTALALDNLFAIEDLYRTALVSGALSVDAAAGSVKPFDARIHELRGHRGQIDAAAAYRSLLDGSAINVSHRDCDKVQDPYSLRCQPQVMGACLDQIRHAAGVLLIEANAVSDNPLIFPDTGEVLSGGNFHAEPVAFAADNLAIAAAEIGALAERRIALLIDATLSGLPPFLVKDGGVNSGFMIAHVTAAALASENKTLAHPASVDSLPTSANQEDHVSMATFAARKLADIAENVANILAIELLAAAQGVDLRAPHATSPALQHAMKTIRADVAHYDLDHYFAPDIAVVARRVRERAFATLSPLSFESEQ.

A cross-link (5-imidazolinone (Ala-Gly)) is located at residues 141–143 (ASG). At S142 the chain carries 2,3-didehydroalanine (Ser).

The protein belongs to the PAL/histidase family. In terms of processing, contains an active site 4-methylidene-imidazol-5-one (MIO), which is formed autocatalytically by cyclization and dehydration of residues Ala-Ser-Gly.

The protein resides in the cytoplasm. The catalysed reaction is L-histidine = trans-urocanate + NH4(+). It participates in amino-acid degradation; L-histidine degradation into L-glutamate; N-formimidoyl-L-glutamate from L-histidine: step 1/3. This chain is Histidine ammonia-lyase, found in Burkholderia pseudomallei (strain 668).